Consider the following 225-residue polypeptide: Cytidylate kinase (225 aa).

12 to 20 contributes to the ATP binding site; it reads GPSGAGKGT.

It belongs to the cytidylate kinase family. Type 1 subfamily.

The protein localises to the cytoplasm. It catalyses the reaction CMP + ATP = CDP + ADP. The enzyme catalyses dCMP + ATP = dCDP + ADP. The protein is Cytidylate kinase of Pectobacterium atrosepticum (strain SCRI 1043 / ATCC BAA-672) (Erwinia carotovora subsp. atroseptica).